The primary structure comprises 455 residues: Indoleacetamide hydrolase (455 aa).

Catalysis depends on charge relay system residues Lys-71 and Ser-146. Catalysis depends on Ser-170, which acts as the Acyl-ester intermediate.

The protein belongs to the amidase family.

It participates in plant hormone metabolism; auxin biosynthesis. Functionally, hydrolyzes indole-3-acetamide (IAM) into indole-3-acetic acid (IAA). The chain is Indoleacetamide hydrolase (iaaH) from Pseudomonas savastanoi (Pseudomonas syringae pv. savastanoi).